The following is a 213-amino-acid chain: uncharacterized protein (213 aa).

Polar residues predominate over residues 1 to 14 (MSSDVLVTTPAQRQ). The interval 1–26 (MSSDVLVTTPAQRQTEPHAEAVSRNR) is disordered. In terms of domain architecture, HTH tetR-type spans 29–89 (QATFRKVLAA…EVYLDLVRQV (61 aa)).

This is an uncharacterized protein from Mycobacterium tuberculosis (strain CDC 1551 / Oshkosh).